We begin with the raw amino-acid sequence, 66 residues long: Large ribosomal subunit protein bL35 (66 aa).

The tract at residues 21–40 (KIKSTQSAKRHGMTKRSKRS) is disordered. Positions 28–40 (AKRHGMTKRSKRS) are enriched in basic residues.

It belongs to the bacterial ribosomal protein bL35 family.

In Ehrlichia canis (strain Jake), this protein is Large ribosomal subunit protein bL35.